Consider the following 452-residue polypeptide: MDDCIAAISSATGEAGIGIVRMTGEGCADVLDSVFKRANDKADFINRKMTYGHIVDDNEIVDEVLVCYMKAPHTYTREDVVEIYTHGGVVAVRKVLEVLLNNGARLAEAGEFTKRAFLNGRIDLSQAEAIIDMIKAKTDKAYSVSMKQLEGSVNRNIKQLRDKLLDMLSHVEYSINFTEDMQDELDNTPVLNEGKEVLDKLKKLSESANRGRIIRDGINTTIIGKPNVGKSSLLNALLKENRAIVTDIPGTTRDVIEEYIDLDGISLKINDTAGIRDTEDIVEKIGVEKSVSFISDSDLIIAIFDSSREFDDEDRKILDLIRDKKSIVLLNKIDLDGEFDVDENLEGIEVIHTSIKNNEGIEDLENKIIEMFNDGYIEANNDNIITNIRHRDIINKAIKSLESSLHDMEAGVPIDCFEVDLRNAWEILGEITGETVDDDVLNKIFSDFCIGK.

Arg-21, Glu-82, and Arg-121 together coordinate (6S)-5-formyl-5,6,7,8-tetrahydrofolate. The TrmE-type G domain maps to 217–373 (GINTTIIGKP…LENKIIEMFN (157 aa)). Residue Asn-227 participates in K(+) binding. GTP-binding positions include 227–232 (NVGKSS), 246–252 (TDIPGTT), and 271–274 (DTAG). Mg(2+) is bound at residue Ser-231. K(+) is bound by residues Thr-246, Ile-248, and Thr-251. Thr-252 provides a ligand contact to Mg(2+). Lys-452 contributes to the (6S)-5-formyl-5,6,7,8-tetrahydrofolate binding site.

It belongs to the TRAFAC class TrmE-Era-EngA-EngB-Septin-like GTPase superfamily. TrmE GTPase family. As to quaternary structure, homodimer. Heterotetramer of two MnmE and two MnmG subunits. Requires K(+) as cofactor.

It is found in the cytoplasm. Its function is as follows. Exhibits a very high intrinsic GTPase hydrolysis rate. Involved in the addition of a carboxymethylaminomethyl (cmnm) group at the wobble position (U34) of certain tRNAs, forming tRNA-cmnm(5)s(2)U34. The sequence is that of tRNA modification GTPase MnmE from Finegoldia magna (strain ATCC 29328 / DSM 20472 / WAL 2508) (Peptostreptococcus magnus).